The sequence spans 98 residues: NADH-ubiquinone oxidoreductase chain 4L (98 aa).

A run of 3 helical transmembrane segments spans residues 1–21, 29–49, and 61–81; these read MPYI…GTLM, SLLC…LLSL, and LILL…LVMI.

The protein belongs to the complex I subunit 4L family. Core subunit of respiratory chain NADH dehydrogenase (Complex I) which is composed of 45 different subunits.

It localises to the mitochondrion inner membrane. The catalysed reaction is a ubiquinone + NADH + 5 H(+)(in) = a ubiquinol + NAD(+) + 4 H(+)(out). Core subunit of the mitochondrial membrane respiratory chain NADH dehydrogenase (Complex I) which catalyzes electron transfer from NADH through the respiratory chain, using ubiquinone as an electron acceptor. Part of the enzyme membrane arm which is embedded in the lipid bilayer and involved in proton translocation. The protein is NADH-ubiquinone oxidoreductase chain 4L (MT-ND4L) of Loxodonta africana (African elephant).